The following is a 581-amino-acid chain: Transcription activator GAGA (581 aa).

In terms of domain architecture, BTB spans 34–99 (VDCTLAAGGR…VYRGEVSVDH (66 aa)). Residues 201 to 397 (VIQAFLPARK…SSGSGSGALS (197 aa)) are interaction with E(bx). Phosphothreonine is present on Thr237. 2 disordered regions span residues 298–343 (ITPA…EQPA) and 364–404 (LRHF…SVPQ). A C2H2-type; degenerate zinc finger spans residues 343–366 (ATCPICYAVIRQSRNLRRHLELRH). Over residues 381–401 (GKKSSSGSSGSGSGALSSSGS) the composition is skewed to low complexity.

As to quaternary structure, interacts with Bin1, lolal, corto, ttk and ph-p. Interacts with FACT subunits Ssrp and dre4/SPT16. Interacts with E(bx). Upon ecdysone stimulation, interacts with Nup98. In terms of processing, the N-terminus is blocked. As to expression, expressed in the central nervous system throughout development.

The protein localises to the nucleus. The protein resides in the chromosome. Transcriptional activator that functions by regulating chromatin structure. Overcomes the repressive effects of chromatin by promoting the open chromatin conformation in promoter gene regions, thereby allowing access to other transcription factors. Binds to DNA Polycomb response elements (PREs) at the bithorax complex and to the proximal region of the engrailed promoter, and positively regulates transcription of many genes including homeotic ones. Involved in zygotic genome activation (ZGA), a critical event in early embryonic development during which the developmental control passes from maternally provided mRNAs to the expression of the zygotic genome after fertilization. Binds to the DNA sequence (GA)n, with optimal binding to the pentamer 5'-GAGAG-3'. Binds DNA as an oligomer. May also act as a transcriptional repressor, maintaining the repressed state of genes including lolal, and down-regulating its own transcription. Required for dosage compensation in males and may be involved in oogenesis. Also has a role in nuclear division. The chain is Transcription activator GAGA (Trl) from Drosophila melanogaster (Fruit fly).